A 150-amino-acid chain; its full sequence is Cell division protein SepF (150 aa).

It belongs to the SepF family. As to quaternary structure, homodimer. Interacts with FtsZ.

It is found in the cytoplasm. Its function is as follows. Cell division protein that is part of the divisome complex and is recruited early to the Z-ring. Probably stimulates Z-ring formation, perhaps through the cross-linking of FtsZ protofilaments. Its function overlaps with FtsA. The polypeptide is Cell division protein SepF (Clostridium kluyveri (strain NBRC 12016)).